A 389-amino-acid polypeptide reads, in one-letter code: Succinyl-diaminopimelate desuccinylase (389 aa).

His-75 is a Zn(2+) binding site. Residue Asp-77 is part of the active site. A Zn(2+)-binding site is contributed by Asp-108. The active-site Proton acceptor is the Glu-142. Zn(2+)-binding residues include Glu-143, Glu-171, and His-357.

It belongs to the peptidase M20A family. DapE subfamily. As to quaternary structure, homodimer. The cofactor is Zn(2+). Co(2+) is required as a cofactor.

It carries out the reaction N-succinyl-(2S,6S)-2,6-diaminopimelate + H2O = (2S,6S)-2,6-diaminopimelate + succinate. It participates in amino-acid biosynthesis; L-lysine biosynthesis via DAP pathway; LL-2,6-diaminopimelate from (S)-tetrahydrodipicolinate (succinylase route): step 3/3. In terms of biological role, catalyzes the hydrolysis of N-succinyl-L,L-diaminopimelic acid (SDAP), forming succinate and LL-2,6-diaminopimelate (DAP), an intermediate involved in the bacterial biosynthesis of lysine and meso-diaminopimelic acid, an essential component of bacterial cell walls. This Paracidovorax citrulli (strain AAC00-1) (Acidovorax citrulli) protein is Succinyl-diaminopimelate desuccinylase.